A 366-amino-acid chain; its full sequence is Dual-specificity RNA methyltransferase RlmN (366 aa).

Glu-91 functions as the Proton acceptor in the catalytic mechanism. A Radical SAM core domain is found at 97–333 (EDDRGTLCVS…TTVRKTRGED (237 aa)). Cys-104 and Cys-338 are disulfide-bonded. Residues Cys-111, Cys-115, and Cys-118 each contribute to the [4Fe-4S] cluster site. Residues 164-165 (GE), Ser-196, 218-220 (SLH), and Asn-295 each bind S-adenosyl-L-methionine. Cys-338 functions as the S-methylcysteine intermediate in the catalytic mechanism.

This sequence belongs to the radical SAM superfamily. RlmN family. The cofactor is [4Fe-4S] cluster.

It is found in the cytoplasm. The catalysed reaction is adenosine(2503) in 23S rRNA + 2 reduced [2Fe-2S]-[ferredoxin] + 2 S-adenosyl-L-methionine = 2-methyladenosine(2503) in 23S rRNA + 5'-deoxyadenosine + L-methionine + 2 oxidized [2Fe-2S]-[ferredoxin] + S-adenosyl-L-homocysteine. The enzyme catalyses adenosine(37) in tRNA + 2 reduced [2Fe-2S]-[ferredoxin] + 2 S-adenosyl-L-methionine = 2-methyladenosine(37) in tRNA + 5'-deoxyadenosine + L-methionine + 2 oxidized [2Fe-2S]-[ferredoxin] + S-adenosyl-L-homocysteine. Its function is as follows. Specifically methylates position 2 of adenine 2503 in 23S rRNA and position 2 of adenine 37 in tRNAs. m2A2503 modification seems to play a crucial role in the proofreading step occurring at the peptidyl transferase center and thus would serve to optimize ribosomal fidelity. This chain is Dual-specificity RNA methyltransferase RlmN, found in Laribacter hongkongensis (strain HLHK9).